The following is a 1079-amino-acid chain: BRD4-interacting chromatin-remodeling complex-associated protein-like (1079 aa).

Disordered regions lie at residues 51–79 and 509–604; these read NSSN…LPLS and LHLS…TPGT. Positions 68 to 79 are enriched in low complexity; the sequence is LGEGPSDGLPLS. Over residues 544-576 the composition is skewed to polar residues; sequence SSASTAHPSLGSAVQSGSSGSNFTGDQLTQPNR. Residues 590 to 604 are compositionally biased toward low complexity; the sequence is SSSKSTSTFSNTPGT. Serine 623 is modified (phosphoserine). Disordered regions lie at residues 669–691, 837–877, and 917–954; these read EKVV…GGQK, TQFG…NHDQ, and TSEE…TESK. Basic and acidic residues-rich tracts occupy residues 918 to 928 and 938 to 952; these read SEEKASRREPL and EGHR…HGTE. Serine 980 is subject to Phosphoserine.

Component of the multiprotein chromatin-remodeling complexes SWI/SNF: SWI/SNF-A (BAF), SWI/SNF-B (PBAF) and related complexes. The canonical complex contains a catalytic subunit (either SMARCA4/BRG1/BAF190A or SMARCA2/BRM/BAF190B) and at least SMARCE1, ACTL6A/BAF53, SMARCC1/BAF155, SMARCC2/BAF170, and SMARCB1/SNF5/BAF47. Other subunits specific to each of the complexes may also be present permitting several possible combinations developmentally and tissue specific. Component of the SWI/SNF (GBAF) subcomplex, which includes at least BICRA or BICRAL (mutually exclusive), BRD9, SS18, the core BAF subunits, SMARCA2/BRM, SMARCA4/BRG1/BAF190A, ACTL6A/BAF53, SMARCC1/BAF155, and SMARCD1/BAF60A.

Component of SWI/SNF chromatin remodeling subcomplex GBAF that carries out key enzymatic activities, changing chromatin structure by altering DNA-histone contacts within a nucleosome in an ATP-dependent manner. The protein is BRD4-interacting chromatin-remodeling complex-associated protein-like of Homo sapiens (Human).